The chain runs to 501 residues: Sucrose transport protein SUT2 (501 aa).

The Cytoplasmic portion of the chain corresponds to 1 to 31 (MPRRPSGGGGGAGPAAAAVRKVPLRKLLRAA). The helical transmembrane segment at 32–52 (SVACGVQFGWALQLSLLTPYV) threads the bilayer. The Extracellular segment spans residues 53–55 (QEL). Residues 56–76 (GIPHAFASLVWLCGPLSGLLV) form a helical membrane-spanning segment. The Cytoplasmic portion of the chain corresponds to 77–98 (QPLVGHLSDRIAPAASPLGRRR). The chain crosses the membrane as a helical span at residues 99-119 (PFIAAGAASIAAAVLTVGFSA). Over 120 to 135 (DLGRIFGDSITPGSTR) the chain is Extracellular. The helical transmembrane segment at 136–156 (LGAIIVYLVGFWLLDVGNNAT) threads the bilayer. Residues 157-176 (QGPCRAFLADLTENDPRRTR) are Cytoplasmic-facing. The helical transmembrane segment at 177 to 197 (IANAYFSLFMALGNILGYATG) threads the bilayer. The Extracellular segment spans residues 198–222 (AYSGWYKIFPFTVTPSCSISCANLK). A helical membrane pass occupies residues 223–243 (SAFLLDIIILVVTTCITVASV). Topologically, residues 244–278 (QEPQSFGSDEADHPSTEQEAFLWELFGSFRYFTLP) are cytoplasmic. A helical membrane pass occupies residues 279–299 (VWMVLIVTALTWIGWFPFILF). The Extracellular portion of the chain corresponds to 300–327 (DTDWMGREIYRGSPDDPSITQSYHDGVR). The helical transmembrane segment at 328 to 348 (MGSFGLMLNSVLLGFTSIVLE) threads the bilayer. The Cytoplasmic segment spans residues 349-356 (KLCRKWGA). Residues 357–377 (GLVWGVSNILMALCFVAMLVI) form a helical membrane-spanning segment. The Extracellular portion of the chain corresponds to 378–394 (TYVAKNMDYPPSGVPPT). The chain crosses the membrane as a helical span at residues 395 to 415 (GIVIASLVVFTILGAPLAITY). Over 416-433 (SIPYAMAASRVENLGLGQ) the chain is Cytoplasmic. The chain crosses the membrane as a helical span at residues 434–454 (GLAMGILNLAIVIPQVIVSLG). The Extracellular segment spans residues 455 to 467 (SGPWDQLFGGGNA). Residues 468-488 (PAFAVAAAASFIGGLVAILGL) traverse the membrane as a helical segment. Over 489–501 (PRARIASRRRGHR) the chain is Cytoplasmic.

This sequence belongs to the glycoside-pentoside-hexuronide (GPH) cation symporter transporter (TC 2.A.2.4) family. As to quaternary structure, homodimer. As to expression, widely expressed.

It localises to the cell membrane. Its pathway is glycan biosynthesis; sucrose metabolism. Responsible for the transport of sucrose into the cell, with the concomitant uptake of protons (symport system). May also transport other glucosides. This is Sucrose transport protein SUT2 (SUT2) from Oryza sativa subsp. japonica (Rice).